The sequence spans 458 residues: Inner kinetochore subunit CHL4 (458 aa).

Belongs to the CENP-N/CHL4 family. In terms of assembly, forms a heterodimer with IML3. CHL4-IML3 is part of a larger constitutive centromere-associated network (CCAN) (also known as central kinetochore CTF19 complex in yeast), which is composed of at least AME1, CHL4, CNN1, CTF3, CTF19, IML3, MCM16, MCM21, MCM22, MHF1, MHF2, MIF2, NKP1, NKP2, OKP1 and WIP1. Interacts with CTF3 and CTF19.

It is found in the nucleus. The protein localises to the chromosome. Its subcellular location is the centromere. The protein resides in the kinetochore. In terms of biological role, component of the kinetochore, a multiprotein complex that assembles on centromeric DNA and attaches chromosomes to spindle microtubules, mediating chromosome segregation and sister chromatid segregation during meiosis and mitosis. Component of the inner kinetochore constitutive centromere-associated network (CCAN), which serves as a structural platform for outer kinetochore assembly. The protein is Inner kinetochore subunit CHL4 (CHL4) of Saccharomyces cerevisiae (strain ATCC 204508 / S288c) (Baker's yeast).